Reading from the N-terminus, the 1117-residue chain is Protein rliB (1117 aa).

The N-terminal stretch at 1 to 23 (MKNINNKILKIFILFLAICSVKS) is a signal peptide. Residues asparagine 136, asparagine 195, asparagine 279, and asparagine 318 are each glycosylated (N-linked (GlcNAc...) asparagine). The G8 domain maps to 266–392 (STWSNNLVPQ…YHNSWTKLAS (127 aa)). 2 PbH1 repeats span residues 522 to 544 (VQKS…TIHG) and 545 to 567 (TNNL…YLED). N-linked (GlcNAc...) asparagine glycans are attached at residues asparagine 547 and asparagine 605. The stretch at 621–642 (NAYNTIIGNSASGGWAGFSFPN) is one PbH1 3 repeat. N-linked (GlcNAc...) asparagine glycans are attached at residues asparagine 728, asparagine 845, asparagine 1030, asparagine 1044, asparagine 1091, and asparagine 1107.

The protein belongs to the comF family.

The protein localises to the secreted. The sequence is that of Protein rliB (rliB) from Dictyostelium discoideum (Social amoeba).